The sequence spans 196 residues: dITP/XTP pyrophosphatase (196 aa).

7-12 provides a ligand contact to substrate; sequence THNPGK. Asp-40 and Asp-69 together coordinate Mg(2+). Residue Asp-69 is the Proton acceptor of the active site. Residues Ser-70, 150 to 153, Lys-173, and 178 to 179 contribute to the substrate site; these read FGYD and HR.

This sequence belongs to the HAM1 NTPase family. Homodimer. The cofactor is Mg(2+).

The catalysed reaction is XTP + H2O = XMP + diphosphate + H(+). The enzyme catalyses dITP + H2O = dIMP + diphosphate + H(+). It carries out the reaction ITP + H2O = IMP + diphosphate + H(+). Functionally, pyrophosphatase that catalyzes the hydrolysis of nucleoside triphosphates to their monophosphate derivatives, with a high preference for the non-canonical purine nucleotides XTP (xanthosine triphosphate), dITP (deoxyinosine triphosphate) and ITP. Seems to function as a house-cleaning enzyme that removes non-canonical purine nucleotides from the nucleotide pool, thus preventing their incorporation into DNA/RNA and avoiding chromosomal lesions. The protein is dITP/XTP pyrophosphatase of Exiguobacterium sp. (strain ATCC BAA-1283 / AT1b).